We begin with the raw amino-acid sequence, 265 residues long: MIKWPWKAQEITQNEDWPWDDALAIPLLVNLTAQEQARLIALAERFLQQKRLVALQGFELDSLKSARIALIFCLPILELGIEWLDGFHEVLIYPAPFVVDDEWEDDIGLVHSQRVVQSGQSWQQGPIILNWLDIQDSFDASGFNLIIHEVAHKLDMRNGDRASGIPFIPLRDVAGWEHDLHAAMNNIQDEIDLVGESAASIDAYAATDPAECFAVLSEYFFSAPELFAPRFPALWQRFCQFYRQDPSQRLRVSAAEGDYGEESEH.

Zn(2+) contacts are provided by His-111, His-148, His-152, and Glu-211.

This sequence belongs to the MtfA family. Interacts with Mlc. Zn(2+) is required as a cofactor.

Its subcellular location is the cytoplasm. Functionally, involved in the modulation of the activity of the glucose-phosphotransferase system (glucose-PTS). Interacts with the transcriptional repressor Mlc, preventing its interaction with DNA and leading to the modulation of expression of genes regulated by Mlc, including ptsG, which encodes the PTS system glucose-specific EIICB component. Shows zinc-dependent metallopeptidase activity. The sequence is that of Mlc titration factor A from Salmonella enteritidis PT4 (strain P125109).